The following is a 432-amino-acid chain: MQHTQSEKLHEEALQHIVGGVNSPSRSYKAVGGGSPVAMERGSGAYFWDVDGNKYIDYLAAYGPIITGHAHPHITKAIQTAAENGVLYGTPTKHEVTFAKMLKEAIPALDKVRFVNSGTEAVMTTIRVARAYTGRTKIIKFAGCYHGHSDLVLVAAGSGPSTLGTPDSAGVPKSIANEVITVPFNDIDSYKEALDKWGNDIAAVLVEPIVGNFGIVEPKSGFLEQVNELTHNAGALVIYDEVITAFRFMYGGAQDLLGVKPDLTALGKIIGGGLPIGAYGGRKEIMEQVAPLGPAYQAGTMAGNPASILSGIACLEVLKEKGTYEKLDRLGAMLEEGILAHAETHGIDITVNRLKGALTVYFTNEKVENYEQAENTDGDMFAAFFKLMLERGINLAPSKYEAWFITTAHTEEDIKDTLKAVDDSFKQLKQRM.

K268 carries the post-translational modification N6-(pyridoxal phosphate)lysine.

The protein belongs to the class-III pyridoxal-phosphate-dependent aminotransferase family. HemL subfamily. As to quaternary structure, homodimer. The cofactor is pyridoxal 5'-phosphate.

It localises to the cytoplasm. It carries out the reaction (S)-4-amino-5-oxopentanoate = 5-aminolevulinate. The protein operates within porphyrin-containing compound metabolism; protoporphyrin-IX biosynthesis; 5-aminolevulinate from L-glutamyl-tRNA(Glu): step 2/2. In Bacillus licheniformis (strain ATCC 14580 / DSM 13 / JCM 2505 / CCUG 7422 / NBRC 12200 / NCIMB 9375 / NCTC 10341 / NRRL NRS-1264 / Gibson 46), this protein is Glutamate-1-semialdehyde 2,1-aminomutase 1.